A 106-amino-acid chain; its full sequence is Small ribosomal subunit protein uS17 (106 aa).

This sequence belongs to the universal ribosomal protein uS17 family. Part of the 30S ribosomal subunit.

Its function is as follows. One of the primary rRNA binding proteins, it binds specifically to the 5'-end of 16S ribosomal RNA. The polypeptide is Small ribosomal subunit protein uS17 (Methanosphaera stadtmanae (strain ATCC 43021 / DSM 3091 / JCM 11832 / MCB-3)).